The sequence spans 784 residues: Endonuclease MutS2 (784 aa).

335-342 (GPNTGGKT) serves as a coordination point for ATP. The interval 527-546 (ERSKKQAEEDEARAHSAREE) is disordered. The 76-residue stretch at 709-784 (LDLRGERYED…GTGVTVVELK (76 aa)) folds into the Smr domain.

It belongs to the DNA mismatch repair MutS family. MutS2 subfamily. Homodimer. Binds to stalled ribosomes, contacting rRNA.

Endonuclease that is involved in the suppression of homologous recombination and thus may have a key role in the control of bacterial genetic diversity. Functionally, acts as a ribosome collision sensor, splitting the ribosome into its 2 subunits. Detects stalled/collided 70S ribosomes which it binds and splits by an ATP-hydrolysis driven conformational change. Acts upstream of the ribosome quality control system (RQC), a ribosome-associated complex that mediates the extraction of incompletely synthesized nascent chains from stalled ribosomes and their subsequent degradation. Probably generates substrates for RQC. This Geobacillus thermodenitrificans (strain NG80-2) protein is Endonuclease MutS2.